Reading from the N-terminus, the 326-residue chain is Mitochondrial substrate carrier family protein R (326 aa).

Solcar repeat units lie at residues 9-95, 101-214, and 226-318; these read TSPM…LKNN, KSSV…FKRI, and VIGI…LCDY. The next 6 helical transmembrane spans lie at 12 to 32, 64 to 84, 104 to 124, 185 to 205, 226 to 246, and 290 to 310; these read MVTL…IAPL, LAGL…YSAI, VQIF…TYPL, GIWR…GVGY, VIGI…QTAA, and LFKG…VAFL.

This sequence belongs to the mitochondrial carrier (TC 2.A.29) family.

It is found in the mitochondrion inner membrane. In terms of biological role, mitochondrial solute carriers shuttle metabolites, nucleotides, and cofactors through the mitochondrial inner membrane. May be involved in the accumulation of coenzyme A in the mitochondrial matrix. The protein is Mitochondrial substrate carrier family protein R (mcfR) of Dictyostelium discoideum (Social amoeba).